The sequence spans 285 residues: Cyclin-Y-like protein 1B (285 aa).

In terms of domain architecture, Cyclin N-terminal spans 111–209; it reads PKRNCIFRHF…CFLELLEFNI (99 aa).

The protein belongs to the cyclin family. Cyclin Y subfamily.

This Homo sapiens (Human) protein is Cyclin-Y-like protein 1B.